Reading from the N-terminus, the 583-residue chain is Potassium-transporting ATPase potassium-binding subunit (583 aa).

A run of 10 helical transmembrane segments spans residues 3–23 (NIIW…WPLG), 66–86 (MACV…LLMA), 135–155 (GLTV…FALI), 177–197 (VLYI…EQGV), 266–286 (LEML…GAKI), 293–313 (VAIF…TVQA), 402–422 (GLYG…LMVG), 440–460 (AVVV…LMCL), 506–526 (VLLG…ILAM), and 549–569 (LFIF…FFPA).

Belongs to the KdpA family. As to quaternary structure, the system is composed of three essential subunits: KdpA, KdpB and KdpC.

Its subcellular location is the cell inner membrane. Its function is as follows. Part of the high-affinity ATP-driven potassium transport (or Kdp) system, which catalyzes the hydrolysis of ATP coupled with the electrogenic transport of potassium into the cytoplasm. This subunit binds the periplasmic potassium ions and delivers the ions to the membrane domain of KdpB through an intramembrane tunnel. In Desulfovibrio desulfuricans (strain ATCC 27774 / DSM 6949 / MB), this protein is Potassium-transporting ATPase potassium-binding subunit.